The following is a 113-amino-acid chain: Hydrogenase maturation factor HypA (113 aa).

H2 provides a ligand contact to Ni(2+). The Zn(2+) site is built by C73, C76, C89, and C92.

This sequence belongs to the HypA/HybF family.

Involved in the maturation of [NiFe] hydrogenases. Required for nickel insertion into the metal center of the hydrogenase. In Chlorobaculum parvum (strain DSM 263 / NCIMB 8327) (Chlorobium vibrioforme subsp. thiosulfatophilum), this protein is Hydrogenase maturation factor HypA.